We begin with the raw amino-acid sequence, 401 residues long: Collagen and calcium-binding EGF domain-containing protein 1 (401 aa).

The N-terminal stretch at 1 to 22 (MIYPGRGASLSVAVALVLFSSG) is a signal peptide. Residues 126–167 (DIDECANNNETVCSQMCVNTPGSYRCDCHSGFYLEDDGKTCT) enclose the EGF-like; calcium-binding domain. Intrachain disulfides connect Cys-130/Cys-142, Cys-138/Cys-151, and Cys-153/Cys-166. The N-linked (GlcNAc...) asparagine glycan is linked to Asn-134. Disordered stretches follow at residues 229 to 321 (TTNS…PGSF) and 344 to 401 (SRPL…DWPV). 2 consecutive Collagen-like domains span residues 234 to 276 (LPGP…PIGP) and 286 to 319 (GRRG…GPPG). Positions 235–244 (PGPPGPPGPA) are enriched in pro residues. Positions 246-258 (TPGAKGSSGSPGQ) are enriched in low complexity.

This sequence belongs to the CCBE1 family. Not expressed in blood or lymphatic endothelial cells, correlating spatially and temporally with the migration routes of endothelial cells that bud from the PCV, migrate in association with somite boundaries and seed the horizontal myoseptum region from where lymphatic precursors later migrate.

It localises to the secreted. Functionally, required for lymphangioblast budding and angiogenic sprouting from venous endothelium during embryogenesis. Required for the formation of facial lymphatic structures. Necessary for lymphangiogenesis, but is probably not part of either the vegfc-vegfr3 signaling or sox18-prox1 transcriptional pathways. This Danio rerio (Zebrafish) protein is Collagen and calcium-binding EGF domain-containing protein 1 (ccbe1).